The following is a 1403-amino-acid chain: Protein FAM135B (1403 aa).

Disordered regions lie at residues 445 to 483, 514 to 548, 648 to 669, and 718 to 740; these read EKNL…EVQE, EDEC…GQTP, REAL…DLSA, and RHAH…LPSG. Over residues 649-661 the composition is skewed to basic and acidic residues; it reads EALDTKPSQPDHA. Residues 731–740 show a composition bias toward polar residues; it reads TESNTSLPSG. Residues serine 775 and serine 776 each carry the phosphoserine modification. The tract at residues 790 to 819 is disordered; sequence TAGFSEDLDPSSKENSPPRHTSLSYGGSRV. Residues 802-814 are compositionally biased toward polar residues; it reads KENSPPRHTSLSY.

It belongs to the FAM135 family.

This Mus musculus (Mouse) protein is Protein FAM135B (Fam135b).